The primary structure comprises 551 residues: Tetrachloroethene reductive dehalogenase (551 aa).

A signal peptide (tat-type signal) is located at residues M1–A39. A 4Fe-4S ferredoxin-type 1 domain is found at P411–D440. Residues C420, C423, C426, C430, C467, C478, C481, and C485 each contribute to the [4Fe-4S] cluster site. The 19-residue stretch at C478 to D496 folds into the 4Fe-4S ferredoxin-type 2 domain.

Belongs to the PceA family. [4Fe-4S] cluster serves as cofactor. It depends on corrinoid as a cofactor. Post-translationally, predicted to be exported by the Tat system. The position of the signal peptide cleavage has been experimentally proven.

The protein localises to the cytoplasm. The protein resides in the cell membrane. Its subcellular location is the secreted. It catalyses the reaction trichloroethene + chloride + A + H(+) = tetrachloroethene + AH2. The enzyme catalyses trichloroethene + AH2 = (Z)-1,2-dichloroethene + chloride + A + H(+). PceT is required as a chaperone for prePceA maturation. In the absence or presence of exogenous vitamin B12, the intracellular corrinoid level decreases in fumarate-grown cells and the PceA precursor forms catalytically inactive, corrinoid-free multiprotein aggregates. Exogenous vitamin B12 is not incorporated into the PceA precursor, even though it affects the transposition of the pce gene cluster. In terms of biological role, catalyzes the reductive dechlorination of tetrachloroethene (PCE) to trichloroethene (TCE) and of trichloroethene to cis-1,2-dichloroethene (DCE). Can also use various chlorinated ethanes such as tetrachloroethane, pentachloroethane and hexachloroethane. Reduced methyl viologen can act as the artificial electron donor. In Desulfitobacterium hafniense (strain Y51), this protein is Tetrachloroethene reductive dehalogenase.